The primary structure comprises 239 residues: Uridylate kinase (239 aa).

10–13 provides a ligand contact to ATP; it reads KFSG. Residues 18 to 23 form an involved in allosteric activation by GTP region; the sequence is GENGFG. Position 52 (glycine 52) interacts with UMP. Glycine 53 and arginine 57 together coordinate ATP. UMP contacts are provided by residues aspartate 73 and 134 to 141; that span reads TGNPYFTT. Residues threonine 161, tyrosine 167, and aspartate 170 each coordinate ATP.

The protein belongs to the UMP kinase family. Homohexamer.

The protein resides in the cytoplasm. It carries out the reaction UMP + ATP = UDP + ADP. It participates in pyrimidine metabolism; CTP biosynthesis via de novo pathway; UDP from UMP (UMPK route): step 1/1. Allosterically activated by GTP. Inhibited by UTP. In terms of biological role, catalyzes the reversible phosphorylation of UMP to UDP. The chain is Uridylate kinase from Campylobacter jejuni subsp. jejuni serotype O:6 (strain 81116 / NCTC 11828).